Consider the following 919-residue polypeptide: WD repeat-containing protein 47 (919 aa).

One can recognise a LisH domain in the interval 10-42 (KEVEIIKLILDFLNSKKLHISMLALEKESGVIN). The 58-residue stretch at 45–102 (FSDDMLFLRQLILDGQWDEVLQFIQPLECMEKFDKKRFRYIILKQKFLEALCVNNAMS) folds into the CTLH domain. Thr-285 carries the post-translational modification Phosphothreonine. Ser-289, Ser-292, Ser-297, and Ser-312 each carry phosphoserine. The tract at residues 393 to 421 (GQSSVSEKEPANGAQNPGPAKQEKNELRD) is disordered. The residue at position 422 (Ser-422) is a Phosphoserine. The disordered stretch occupies residues 500 to 590 (LNQQCNGSKG…SLSRSKGEED (91 aa)). Over residues 517-551 (VTSFTTPPQDSSQRLTHDASNIHTSTPRNPGSTNH) the composition is skewed to polar residues. Thr-542 is modified (phosphothreonine). 7 WD repeats span residues 604–643 (EDTQ…DPSA), 659–698 (HHKG…CNAT), 706–748 (MHDG…GQGL), 753–791 (GHTG…CVRV), 798–837 (GTGS…MVQS), 840–879 (PHSS…TKQL), and 886–918 (EHKD…WTYN).

As to quaternary structure, interacts with MAP1S (via WD repeats).

It is found in the cytoplasm. It localises to the cytoskeleton. This Homo sapiens (Human) protein is WD repeat-containing protein 47 (WDR47).